The following is a 345-amino-acid chain: S-adenosylmethionine:tRNA ribosyltransferase-isomerase (345 aa).

It belongs to the QueA family. As to quaternary structure, monomer.

It is found in the cytoplasm. It catalyses the reaction 7-aminomethyl-7-carbaguanosine(34) in tRNA + S-adenosyl-L-methionine = epoxyqueuosine(34) in tRNA + adenine + L-methionine + 2 H(+). It functions in the pathway tRNA modification; tRNA-queuosine biosynthesis. Functionally, transfers and isomerizes the ribose moiety from AdoMet to the 7-aminomethyl group of 7-deazaguanine (preQ1-tRNA) to give epoxyqueuosine (oQ-tRNA). This Anaeromyxobacter dehalogenans (strain 2CP-C) protein is S-adenosylmethionine:tRNA ribosyltransferase-isomerase.